A 169-amino-acid chain; its full sequence is uncharacterized protein (169 aa).

The helical transmembrane segment at 97 to 117 threads the bilayer; sequence IVIFCILVIVAFVIWLVVWLF. The interval 137–169 is disordered; sequence NYSGLPTPQPTPTHYPAEQYSYDPARDRDNYRY. Residues 160 to 169 show a composition bias toward basic and acidic residues; it reads PARDRDNYRY.

It is found in the membrane. This is an uncharacterized protein from Caenorhabditis elegans.